Here is a 302-residue protein sequence, read N- to C-terminus: Pyridoxal 5'-phosphate synthase subunit PdxS (302 aa).

D32 provides a ligand contact to D-ribose 5-phosphate. K89 (schiff-base intermediate with D-ribose 5-phosphate) is an active-site residue. G161 contacts D-ribose 5-phosphate. Position 173 (R173) interacts with D-glyceraldehyde 3-phosphate. D-ribose 5-phosphate contacts are provided by residues G222 and 243–244 (GS). The disordered stretch occupies residues 276-302 (ASNIGEGMQGDPNADLPEDERMQDRGN).

The protein belongs to the PdxS/SNZ family. In terms of assembly, in the presence of PdxT, forms a dodecamer of heterodimers.

The enzyme catalyses aldehydo-D-ribose 5-phosphate + D-glyceraldehyde 3-phosphate + L-glutamine = pyridoxal 5'-phosphate + L-glutamate + phosphate + 3 H2O + H(+). Its pathway is cofactor biosynthesis; pyridoxal 5'-phosphate biosynthesis. Catalyzes the formation of pyridoxal 5'-phosphate from ribose 5-phosphate (RBP), glyceraldehyde 3-phosphate (G3P) and ammonia. The ammonia is provided by the PdxT subunit. Can also use ribulose 5-phosphate and dihydroxyacetone phosphate as substrates, resulting from enzyme-catalyzed isomerization of RBP and G3P, respectively. In Halobacterium salinarum (strain ATCC 29341 / DSM 671 / R1), this protein is Pyridoxal 5'-phosphate synthase subunit PdxS.